The sequence spans 1391 residues: Leucine-rich PPR motif-containing protein, mitochondrial (1391 aa).

The N-terminal 42 residues, 1-42, are a transit peptide targeting the mitochondrion; it reads MSALLAGARFLLRPGLRALPAPCVRLSPGQGRYLNNTPGHFA. PPR repeat units lie at residues 110-144, 145-179, 180-214, 215-249, 250-284, 389-425, 704-738, 741-775, 779-813, 815-850, 948-982, 1028-1062, 1063-1093, 1100-1134, and 1310-1344; these read LLRSCGSLLPELQMSERTEMAHRIWEKLQELGAVF, DVSHYNALLKVYLQNEHKFSPTEYLAKMEAANVQP, NRVTYQRLIAAYCNEGDIEGASKILGFMKNKDLPI, TEAVFNTLVTGHARAGDMENAKNILSVMRSAGIEP, GPETYVALLTAYAEKGDINNIKQTLENVEKNEGSL, NLHSAPLQFALYCSLDAKKADLALELMKMMKQEGMPV, AIGTYAALIQLCCRHDNPDEALNLKQELNRKDSSA, DTSKYLALVKVFGKNGRIADAINVLKEMKEKDVPL, TTTSFFHILNAAALRGDAETVDKIHESIVTLGLAK, TSNLCSPLVSVHLEKGDLPAAMETLFTCSKKYNCMP, RDDMYYYLLKLCKENDDWKKADSAWTKIQEENVIP, PESSFQKRVQVLSKKNRAKDAYEAFMEGENNGTAM, SASAYSSLIRSMLSEGMLEEAKKVLNTAENH, NDAASSLLIITQVRRDYLKDALASLKAMLEGDKVP, and RETAYSYLMKCYATDKDATAATALYEKMKSESVSP. The tract at residues 1118 to 1387 is RNA-binding; sequence KDALASLKAM…KLKKDKADSY (270 aa).

The protein localises to the mitochondrion. Its subcellular location is the nucleus. Functionally, may play a role in RNA metabolism in both nuclei and mitochondria. May bind mature mRNA in the nucleus outer membrane. In mitochondria binds to poly(A) mRNA. May be involved in transcription regulation. Binds single-stranded DNA. This chain is Leucine-rich PPR motif-containing protein, mitochondrial (lrpprc), found in Xenopus tropicalis (Western clawed frog).